A 938-amino-acid chain; its full sequence is Inner tegument protein (938 aa).

The segment at Glu-457–Gly-938 is interaction with large tegument protein.

Belongs to the herpesviridae inner tegument protein family. In terms of assembly, interacts (via C-terminus) with the large tegument protein/LTP (via N-terminus).

It is found in the virion tegument. The protein resides in the host cytoplasm. The protein localises to the host nucleus. It localises to the host Golgi apparatus. Its subcellular location is the host trans-Golgi network. In terms of biological role, plays an essential role in cytoplasmic secondary envelopment during viral egress. Interacts with the capsid via the large tegument protein/LTP and participates in its transport to the host trans-Golgi network (TGN) where secondary envelopment occurs. Modulates tegumentation and capsid accumulation at the viral assembly complex. In Human herpesvirus 7 (strain JI) (HHV-7), this protein is Inner tegument protein (U30).